The chain runs to 404 residues: Serine/threonine transporter SstT (404 aa).

9 helical membrane passes run 17–37 (IGIG…VTAI), 39–59 (ILGQ…VFAL), 75–95 (MTLI…VAVI), 138–158 (ALAT…GLAL), 179–199 (IVVW…FSTV), 212–232 (LLIL…NPLL), 287–307 (IPLG…VLTL), 319–339 (FLTA…ASGV), and 354–374 (FGIS…VGVI).

It belongs to the dicarboxylate/amino acid:cation symporter (DAACS) (TC 2.A.23) family.

The protein localises to the cell membrane. It carries out the reaction L-serine(in) + Na(+)(in) = L-serine(out) + Na(+)(out). The catalysed reaction is L-threonine(in) + Na(+)(in) = L-threonine(out) + Na(+)(out). Functionally, involved in the import of serine and threonine into the cell, with the concomitant import of sodium (symport system). The chain is Serine/threonine transporter SstT from Streptococcus equi subsp. equi (strain 4047).